The primary structure comprises 876 residues: MATERYNPRDAEPRWQQKWNEDKVFETDNSDPREKYYVLEMFPYPSGRIHMGHVRNYAMGDVVARYKRARGYNVLHPMGWDAFGMPAENAAMERGVHPASWTYQNIGSMKAQLKAMGLSLDWSREFATCDVEYYQHQQHLFLDFLEKGLVYRKQSKVNWDPVDNTVLANEQVIDGRGWRSGALVEQRELTQWFFKITDFSQDLLDALDTLDQWPEKVRLMQKNWIGRSEGLTIRWEIVAETAPAGETEITVYTTRPDTLFGASFLAIAADHPLAKDAAAKNADIEAFCEECRRAGTSLAALETAEKKGMDTGIRVRHPLDPSWELPVYVANFVLMDYGTGAIFGCPSGDQRDLDFARKYGLPVVAVVMPQDGDAASFSVGDTAYDGDGVMINSRFLDGKTTEEAFNIVADRLSAASLGNTPQGERKVNFRLRDWGISRQRYWGCPIPVIHCDDCGVVPVPKKDLPVKLPDDVTFDQPGNPLDRHPTWRHVSCPTCGKDARRETDTMDTFVDSSWYFTRFTAPWEAKPTDPEAANRWLPVDQYIGGIEHAILHLLYSRFFTRAMRETGHVAATEPFKGLFTQGMVVHETYSRGAGGSREWVAPADIRIEEIDGKRRALLLTTGEEIAIGSIEKMSKSKKNVVDPDDIIASYGADTARFFVLSDSPPERDVIWSEAGVEGAHRFTQRLWRLISEAADALSAVAPAPATEGEALSISQAAHRTLKAVENDYDKLWFNKAVARIYELVNALAAPMTRVAAGEGDATYRAAVRNAAEILIQLVAPMTPHLAEECWMALGNEGLLARTGWPQYGETLVIENDVVLPVQINGKKRAELTISRDADQNAVTNAVLDLDAVKNALNGQAPKKIIVVPQRIVNIVV.

The interval 1 to 20 (MATERYNPRDAEPRWQQKWN) is disordered. A 'HIGH' region motif is present at residues 43–53 (PYPSGRIHMGH). Positions 632–636 (KMSKS) match the 'KMSKS' region motif. Position 635 (Lys635) interacts with ATP.

The protein belongs to the class-I aminoacyl-tRNA synthetase family.

The protein resides in the cytoplasm. It catalyses the reaction tRNA(Leu) + L-leucine + ATP = L-leucyl-tRNA(Leu) + AMP + diphosphate. The polypeptide is Leucine--tRNA ligase (Rhizobium leguminosarum bv. trifolii (strain WSM2304)).